The primary structure comprises 215 residues: Sperm acrosome membrane-associated protein 3 (215 aa).

The Cytoplasmic segment spans residues 1–63 (MVSALRGAPL…EARSRALRRR (63 aa)). The helical; Signal-anchor for type II membrane protein transmembrane segment at 64-84 (WCPAGIMLLALVCLLSCLLPS) threads the bilayer. Residues 85-215 (SEAKLYGRCE…LTEWVDGCDF (131 aa)) are Extracellular-facing. The C-type lysozyme domain maps to 88–215 (KLYGRCELAR…LTEWVDGCDF (128 aa)). 4 disulfide bridges follow: C93–C213, C117–C201, C151–C166, and C162–C180.

The protein belongs to the glycosyl hydrolase 22 family. In terms of assembly, interacts with ASTL. The processed form derives from the membrane form by proteolytic processing. The processed form is expressed in sperm (at protein level). Expressed in testis, epididymis and placenta.

It localises to the cytoplasmic vesicle. The protein localises to the secretory vesicle. The protein resides in the acrosome membrane. Its subcellular location is the secreted. Functionally, sperm surface membrane protein that may be involved in sperm-egg plasma membrane adhesion and fusion during fertilization. It could be a potential receptor for the egg oligosaccharide residue N-acetylglucosamine, which is present in the extracellular matrix over the egg plasma membrane. The processed form has no detectable bacteriolytic activity in vitro. This Homo sapiens (Human) protein is Sperm acrosome membrane-associated protein 3 (SPACA3).